We begin with the raw amino-acid sequence, 181 residues long: I-Kappa-B like protein C2 (181 aa).

ANK repeat units follow at residues 54 to 86 (DGKX…DINS), 91 to 121 (DGNT…DMEI), and 125 to 154 (ARKT…RCDV).

Belongs to the polydnaviridae I-Kappa-B-like protein family.

Its function is as follows. Suppresses the host immune response through NF-kappa-B inactivation. Possesses ankyrin repeat domains required for NF-kappa-B binding but lacks the regulatory regions required for dissociation from NF-kappa-B and degradation. Therefore, prevents host NF-kappa-B release and subsequent activation. This is I-Kappa-B like protein C2 (C2) from Microplitis demolitor (Parasitoid wasp).